The sequence spans 318 residues: ZAR1-like protein (318 aa).

The disordered stretch occupies residues 149 to 211; that stretch reads LSDPPEAGQP…PVDSSQPLGR (63 aa). The segment covering 155–169 has biased composition (pro residues); it reads AGQPPPPLPPPSPPP. The segment at 219 to 304 adopts a 3CxxC-type zinc-finger fold; the sequence is PKYGYFHCKD…QELCGRCKDK (86 aa).

It belongs to the ZAR1 family. Interacts with YBX2.

It localises to the cytoplasm. Its subcellular location is the cytoplasmic ribonucleoprotein granule. In terms of biological role, mRNA-binding protein required for maternal mRNA storage, translation and degradation during oocyte maturation. Probably promotes formation of some phase-separated membraneless compartment that stores maternal mRNAs in oocytes: acts by undergoing liquid-liquid phase separation upon binding to maternal mRNAs. Binds to the 3'-UTR of maternal mRNAs, inhibiting their translation. The polypeptide is ZAR1-like protein (ZAR1L) (Bos taurus (Bovine)).